The sequence spans 172 residues: Adenylate kinase isoenzyme 6 (172 aa).

Gly-13, Gly-15, Lys-16, Thr-17, and Thr-18 together coordinate ATP. An NMPbind region spans residues 33 to 56 (NVGDLAREGQLYDGYDEEYDCPIL). Residues 108-118 (NRGYNEKKLKD) form an LID region. ATP-binding residues include Arg-109 and Lys-148.

This sequence belongs to the adenylate kinase family. AK6 subfamily. Monomer and homodimer. Interacts with small ribosomal subunit protein uS11. Not a structural component of 43S pre-ribosomes, but transiently interacts with them by binding to uS11. Interacts with COIL (via C-terminus).

The protein localises to the cytoplasm. Its subcellular location is the nucleus. The protein resides in the nucleoplasm. It is found in the cajal body. It catalyses the reaction AMP + ATP = 2 ADP. The catalysed reaction is ATP + H2O = ADP + phosphate + H(+). Functionally, broad-specificity nucleoside monophosphate (NMP) kinase that catalyzes the reversible transfer of the terminal phosphate group between nucleoside triphosphates and monophosphates. Also has ATPase activity. Involved in the late cytoplasmic maturation steps of the 40S ribosomal particles, specifically 18S rRNA maturation. While NMP activity is not required for ribosome maturation, ATPase activity is. Associates transiently with small ribosomal subunit protein uS11. ATP hydrolysis breaks the interaction with uS11. May temporarily remove uS11 from the ribosome to enable a conformational change of the ribosomal RNA that is needed for the final maturation step of the small ribosomal subunit. Its NMP activity may have a role in nuclear energy homeostasis. May be involved in regulation of Cajal body (CB) formation. The protein is Adenylate kinase isoenzyme 6 of Bos taurus (Bovine).